The primary structure comprises 293 residues: Proteinase T (293 aa).

Positions 1–12 (EFIEQDAVVTIS) are excised as a propeptide. Residues 19-293 (PWGLARISSQ…VLINNGEGSA (275 aa)) form the Peptidase S8 domain. Cystine bridges form between C46–C137 and C192–C262. Catalysis depends on charge relay system residues D51, H83, and S238.

It belongs to the peptidase S8 family.

Its function is as follows. Serine proteinase. In Parengyodontium album (Tritirachium album), this protein is Proteinase T (PROT).